The sequence spans 297 residues: Phosphoribosylaminoimidazole-succinocarboxamide synthase (297 aa).

The protein belongs to the SAICAR synthetase family.

It carries out the reaction 5-amino-1-(5-phospho-D-ribosyl)imidazole-4-carboxylate + L-aspartate + ATP = (2S)-2-[5-amino-1-(5-phospho-beta-D-ribosyl)imidazole-4-carboxamido]succinate + ADP + phosphate + 2 H(+). Its pathway is purine metabolism; IMP biosynthesis via de novo pathway; 5-amino-1-(5-phospho-D-ribosyl)imidazole-4-carboxamide from 5-amino-1-(5-phospho-D-ribosyl)imidazole-4-carboxylate: step 1/2. This is Phosphoribosylaminoimidazole-succinocarboxamide synthase (purC) from Mycobacterium leprae (strain TN).